The sequence spans 1642 residues: DNA-directed RNA polymerase I subunit RPA1 (1642 aa).

Cysteine 66, cysteine 69, cysteine 75, and histidine 78 together coordinate Zn(2+). Mg(2+) contacts are provided by aspartate 565, aspartate 567, and aspartate 569. Residues 939 to 951 (PQDFFFHCMAGRE) are bridging helix. The disordered stretch occupies residues 1337–1428 (DADKDDDNDL…GNDNDGDDKA (92 aa)). Positions 1340 to 1350 (KDDDNDLDNGD) are enriched in acidic residues. Positions 1351-1361 (EVGRSKAKAND) are enriched in basic and acidic residues. 2 stretches are compositionally biased toward acidic residues: residues 1362–1373 (DDSSDDNDDDDA) and 1386–1424 (KDYDDPDDVEELHDANDDDDEAEDEDDEEKGQDGNDNDG). Phosphoserine is present on residues serine 1364 and serine 1365.

This sequence belongs to the RNA polymerase beta' chain family. As to quaternary structure, component of the RNA polymerase I (Pol I) complex consisting of at least 13 subunits. In terms of processing, phosphorylated.

The protein localises to the nucleus. It is found in the nucleolus. The catalysed reaction is RNA(n) + a ribonucleoside 5'-triphosphate = RNA(n+1) + diphosphate. Its function is as follows. DNA-dependent RNA polymerase catalyzes the transcription of DNA into RNA using the four ribonucleoside triphosphates as substrates. Largest and catalytic core component of RNA polymerase I which synthesizes ribosomal RNA precursors. Forms the polymerase active center together with the second largest subunit. A single stranded DNA template strand of the promoter is positioned within the central active site cleft of Pol I. A bridging helix emanates from RPA1 and crosses the cleft near the catalytic site and is thought to promote translocation of Pol I by acting as a ratchet that moves the RNA-DNA hybrid through the active site by switching from straight to bent conformations at each step of nucleotide addition. This Drosophila melanogaster (Fruit fly) protein is DNA-directed RNA polymerase I subunit RPA1 (RpI1).